A 131-amino-acid polypeptide reads, in one-letter code: UPF0102 protein YraN (131 aa).

Residues 1–19 (MATVPTRSGSPRQLTTKQT) show a composition bias toward polar residues. Residues 1-21 (MATVPTRSGSPRQLTTKQTGD) form a disordered region.

The protein belongs to the UPF0102 family.

The polypeptide is UPF0102 protein YraN (Escherichia coli O45:K1 (strain S88 / ExPEC)).